We begin with the raw amino-acid sequence, 546 residues long: Phosphatidylinositol 4-phosphate 5-kinase type-1 alpha (546 aa).

Positions 66 to 434 (TSSALKGAIQ…RFQRFMCNTV (369 aa)) constitute a PIPK domain. Lysine 88 participates in a covalent cross-link: Glycyl lysine isopeptide (Lys-Gly) (interchain with G-Cter in ubiquitin). Disordered regions lie at residues 442–475 (PSPT…SGEH) and 491–518 (LGRP…PSFS). Composition is skewed to low complexity over residues 450-462 (SGPS…GPSG) and 509-518 (GSPVPGPSFS).

In terms of assembly, interacts with RAC1. Interacts with TUT1. Forms a complex with CDH1/E-cadherin, CTNNB1/beta-catenin and CTNND1 at the plasma membrane upon calcium stimulation. Found in a ternary complex with IRS1 and DGKZ in the absence of insulin stimulation. Interacts with DGKZ. Interacts with PIP4K2C; the interaction inhibits PIP5K1A kinase activity. As to expression, highest expression in brain. Also detected in skeletal muscle, testis, brain and lung.

The protein resides in the cell membrane. Its subcellular location is the cytoplasm. It localises to the nucleus. It is found in the nucleus speckle. The protein localises to the cell projection. The protein resides in the ruffle. Its subcellular location is the lamellipodium. The enzyme catalyses a 1,2-diacyl-sn-glycero-3-phospho-(1D-myo-inositol 4-phosphate) + ATP = a 1,2-diacyl-sn-glycero-3-phospho-(1D-myo-inositol-4,5-bisphosphate) + ADP + H(+). The catalysed reaction is 1-octadecanoyl-2-(5Z,8Z,11Z,14Z)-eicosatetraenoyl-sn-glycero-3-phospho-1D-myo-inositol 4-phosphate + ATP = 1-octadecanoyl-2-(5Z,8Z,11Z,14Z)-eicosatetraenoyl-sn-glycero-3-phospho-1D-myo-inositol 4,5-bisphosphate + ADP + H(+). It carries out the reaction 1,2-dihexadecanoyl-sn-glycero-3-phospho-(1D-myo-inositol-4-phosphate) + ATP = 1,2-dihexadecanoyl-sn-glycero-3-phospho-(1D-myo-inositol-4,5-bisphosphate) + ADP + H(+). It catalyses the reaction 1-octadecanoyl-2-(9Z)-octadecenoyl-sn-glycero-3-phospho-1D-myo-inositol 4-phosphate + ATP = 1-octadecanoyl-2-(9Z)-octadecenoyl-sn-glycero-3-phospho-1D-myo-inositol 4,5-bisphosphate + ADP + H(+). The enzyme catalyses 1-octadecanoyl-2-(9Z)-octadecenoyl-sn-glycero-3-phospho-1D-myo-inositol + ATP = 1-octadecanoyl-2-(9Z)-octadecenoyl-sn-glycero-3-phospho-1D-myo-inositol 5-phosphate + ADP + H(+). The catalysed reaction is 1-octadecanoyl-2-(9Z,12Z)-octadecadienoyl-sn-glycero-3-phospho-1D-myo-inositol + ATP = 1-octadecanoyl-2-(9Z,12Z)-octadecadienoyl-sn-glycero-3-phospho-1D-myo-inositol 5-phosphate + ADP + H(+). It carries out the reaction 1-octadecanoyl-2-(5Z,8Z,11Z,14Z-eicosatetraenoyl)-sn-glycero-3-phospho-(1D-myo-inositol) + ATP = 1-octadecanoyl-2-(5Z,8Z,11Z,14Z)-eicosatetraenoyl-sn-glycero-3-phospho-1D-myo-inositol 5-phosphate + ADP + H(+). It catalyses the reaction 1,2-di-(9Z,12Z)-octadecadienoyl-sn-glycero-3-phospho-1D-myo-inositol + ATP = 1,2-di(9Z,12Z)-octadecadienoyl-sn-glycero-3-phospho-1D-myo-inositol 5-phosphate + ADP + H(+). With respect to regulation, activated by phosphatidic acid. Its function is as follows. Catalyzes the phosphorylation of phosphatidylinositol 4-phosphate (PtdIns(4)P/PI4P) to form phosphatidylinositol 4,5-bisphosphate (PtdIns(4,5)P2/PIP2), a lipid second messenger that regulates several cellular processes such as signal transduction, vesicle trafficking, actin cytoskeleton dynamics, cell adhesion, and cell motility. PtdIns(4,5)P2 can directly act as a second messenger or can be utilized as a precursor to generate other second messengers: inositol 1,4,5-trisphosphate (IP3), diacylglycerol (DAG) or phosphatidylinositol-3,4,5-trisphosphate (PtdIns(3,4,5)P3/PIP3). PIP5K1A-mediated phosphorylation of PtdIns(4)P is the predominant pathway for PtdIns(4,5)P2 synthesis. Can also use phosphatidylinositol (PtdIns) as substrate in vitro. Together with PIP5K1C, is required for phagocytosis, both enzymes regulating different types of actin remodeling at sequential steps. Promotes particle ingestion by activating the WAS GTPase-binding protein that induces Arp2/3 dependent actin polymerization at the nascent phagocytic cup. Together with PIP5K1B, is required, after stimulation by G-protein coupled receptors, for the synthesis of IP3 that will induce stable platelet adhesion. Recruited to the plasma membrane by the E-cadherin/beta-catenin complex where it provides the substrate PtdIns(4,5)P2 for the production of PtdIns(3,4,5)P3, IP3 and DAG, that will mobilize internal calcium and drive keratinocyte differentiation. Positively regulates insulin-induced translocation of SLC2A4 to the cell membrane in adipocytes. Together with PIP5K1C has a role during embryogenesis. Independently of its catalytic activity, is required for membrane ruffling formation, actin organization and focal adhesion formation during directional cell migration by controlling integrin-induced translocation of the small GTPase RAC1 to the plasma membrane. Also functions in the nucleus where it acts as an activator of TUT1 adenylyltransferase activity in nuclear speckles, thereby regulating mRNA polyadenylation of a select set of mRNAs. The protein is Phosphatidylinositol 4-phosphate 5-kinase type-1 alpha of Mus musculus (Mouse).